Reading from the N-terminus, the 254-residue chain is MDGGGAHRTPEDVFRDFRARRAGMIKALTTDVEKFYQQCDPEKENLCLYGLPNETWEVNLPAEEVPPELPEPALGINFARDGMDEKDWLSLVAVHSDTWLLAVAFYFGARFGFDKESRKRLFSMINNLPTIYEVVTGTAKKQSKEKTPKTSGKSNKSGTKPSRQPEPNSRGPKMPPPKDEDDSGGEEEEEEEDHENTLCGACGDNYGQDEFWICCDACETWFHGKCVKITPAKAEHIKHYKCPNCSSSSKRARA.

Residues Gly-137–His-194 are disordered. A compositionally biased stretch (low complexity) spans Lys-149 to Ser-162. The span at Asp-179–His-194 shows a compositional bias: acidic residues. The segment at Asn-196–Ser-248 adopts a PHD-type zinc-finger fold.

It belongs to the Alfin family. In terms of assembly, interacts with H3K4me3 and to a lesser extent with H3K4me2.

The protein localises to the nucleus. Its function is as follows. Histone-binding component that specifically recognizes H3 tails trimethylated on 'Lys-4' (H3K4me3), which mark transcription start sites of virtually all active genes. This Oryza sativa subsp. japonica (Rice) protein is PHD finger protein ALFIN-LIKE 8.